A 226-amino-acid polypeptide reads, in one-letter code: 3-dehydroquinate dehydratase (226 aa).

Residues Glu29–Arg31 and Arg56 each bind 3-dehydroquinate. His120 (proton donor/acceptor) is an active-site residue. The Schiff-base intermediate with substrate role is filled by Lys146. The 3-dehydroquinate site is built by Arg187, Thr208, and Gln212.

The protein belongs to the type-I 3-dehydroquinase family. As to quaternary structure, homodimer.

It carries out the reaction 3-dehydroquinate = 3-dehydroshikimate + H2O. Its pathway is metabolic intermediate biosynthesis; chorismate biosynthesis; chorismate from D-erythrose 4-phosphate and phosphoenolpyruvate: step 3/7. Involved in the third step of the chorismate pathway, which leads to the biosynthesis of aromatic amino acids. Catalyzes the cis-dehydration of 3-dehydroquinate (DHQ) and introduces the first double bond of the aromatic ring to yield 3-dehydroshikimate. In Halobacterium salinarum (strain ATCC 700922 / JCM 11081 / NRC-1) (Halobacterium halobium), this protein is 3-dehydroquinate dehydratase.